Reading from the N-terminus, the 198-residue chain is Probable GTP-binding protein EngB (198 aa).

In terms of domain architecture, EngB-type G spans 21 to 195; it reads NFSEVAFLGR…EDIIINQTLG (175 aa). GTP-binding positions include 29–36, 56–60, 81–84, 151–154, and 174–176; these read GRSNVGKS, GKTQL, DLPG, TKCD, and VSN. Ser-36 and Thr-58 together coordinate Mg(2+).

It belongs to the TRAFAC class TrmE-Era-EngA-EngB-Septin-like GTPase superfamily. EngB GTPase family. The cofactor is Mg(2+).

Functionally, necessary for normal cell division and for the maintenance of normal septation. In Campylobacter jejuni subsp. jejuni serotype O:23/36 (strain 81-176), this protein is Probable GTP-binding protein EngB.